A 122-amino-acid chain; its full sequence is MIQQESRLKVADNTGAKEILAIRVLGGSGRRYAGIGDVIVATVKDAIPGGNVKKGDVVKAVIVRTKKERRRADGSYIKFDENAAVILKNDGDPRGTRIFGPVGRELRDKKFMKIISLAPEVL.

Belongs to the universal ribosomal protein uL14 family. As to quaternary structure, part of the 50S ribosomal subunit. Forms a cluster with proteins L3 and L19. In the 70S ribosome, L14 and L19 interact and together make contacts with the 16S rRNA in bridges B5 and B8.

Binds to 23S rRNA. Forms part of two intersubunit bridges in the 70S ribosome. The protein is Large ribosomal subunit protein uL14 of Renibacterium salmoninarum (strain ATCC 33209 / DSM 20767 / JCM 11484 / NBRC 15589 / NCIMB 2235).